Consider the following 484-residue polypeptide: Probable sphingolipid transporter spinster homolog 2 (484 aa).

A disordered region spans residues 1 to 23 (MDVDGEGDRGQNPRIMERDSDSI). Residues 38–58 (LLFVFCVVNLINYIDRGAIAS) traverse the membrane as a helical segment. Residues asparagine 62 and asparagine 85 are each glycosylated (N-linked (GlcNAc...) asparagine). 11 helical membrane-spanning segments follow: residues 93 to 113 (VLSSAFMVGLLVASPIFASLA), 122 to 142 (IGVGLSIWTLAVIGCGLSFDF), 147 to 167 (ICRMFVGVGEASFVSLAAPFI), 181 to 201 (AVFYMCIPTGYAFGYVYGGVV), 209 to 229 (AAFWGEAILMLPFAVLGFVIK), 273 to 293 (VYVTNILGYIAYNFVLGAYSY), 311 to 331 (IFGGVTVVCGIVGTLSGGVIL), 345 to 362 (LSVSTFIGAIFCFAAFCF), 377 to 397 (LLVFATQGPVNFIVLHCVKPS), 405 to 425 (MSTVSIHIFGDVPSSPLVGVL), and 436 to 456 (SLVLTFVLFPAAAIWSIGIFL). Residue serine 466 is modified to Phosphoserine.

Belongs to the major facilitator superfamily. Spinster (TC 2.A.1.49) family.

Its subcellular location is the late endosome membrane. It localises to the lysosome membrane. Functionally, probable sphingolipid transporter that plays a central role in endosomes and/or lysosomes storage. In Arabidopsis thaliana (Mouse-ear cress), this protein is Probable sphingolipid transporter spinster homolog 2.